Reading from the N-terminus, the 463-residue chain is Lactadherin (463 aa).

A signal peptide spans Met-1 to Ala-22. EGF-like domains are found at residues Ser-24–Asn-61 and Glu-64–Glu-108. Cystine bridges form between Cys-28–Cys-39, Cys-33–Cys-49, and Cys-51–Cys-60. N-linked (GlcNAc...) asparagine glycosylation occurs at Asn-61. 6 disulfides stabilise this stretch: Cys-68–Cys-79, Cys-73–Cys-96, Cys-98–Cys-107, Cys-148–Cys-303, Cys-290–Cys-294, and Cys-308–Cys-463. The Cell attachment site motif lies at Arg-87–Asp-89. 2 consecutive F5/8 type C domains span residues Cys-148–Cys-303 and Cys-308–Cys-463. The N-linked (GlcNAc...) asparagine glycan is linked to Asn-266. N-linked (GlcNAc...) asparagine glycans are attached at residues Asn-316 and Asn-426.

N-glycosylated. Isoform 1 also exists in both an O-glycosylated and a non-O-glycosylated form. In terms of tissue distribution, mammary epithelial cell surfaces and spermatozoan. Isoform 2 is present in brain, heart, kidney and spleen and at low levels in lung, liver, small intestine and testis.

The protein resides in the membrane. It is found in the secreted. Its subcellular location is the cytoplasmic vesicle. It localises to the secretory vesicle. The protein localises to the acrosome membrane. Its function is as follows. Contributes to phagocytic removal of apoptotic cells in many tissues. Specific ligand for the alpha-v/beta-3 and alpha-v/beta-5 receptors. Also binds to phosphatidylserine-enriched cell surfaces in a receptor-independent manner. Zona pellucida-binding protein which may play a role in gamete interaction. Plays an important role in the maintenance of intestinal epithelial homeostasis and the promotion of mucosal healing. Promotes VEGF-dependent neovascularization. This is Lactadherin (Mfge8) from Mus musculus (Mouse).